The sequence spans 189 residues: Flavin prenyltransferase UbiX (189 aa).

FMN contacts are provided by residues 11–13 (GAS), Ser37, 88–91 (SMRT), and Arg123. Tyr153 lines the dimethylallyl phosphate pocket.

The protein belongs to the UbiX/PAD1 family.

It carries out the reaction dimethylallyl phosphate + FMNH2 = prenylated FMNH2 + phosphate. Flavin prenyltransferase that catalyzes the synthesis of the prenylated FMN cofactor (prenyl-FMN) for 4-hydroxy-3-polyprenylbenzoic acid decarboxylase UbiD. The prenyltransferase is metal-independent and links a dimethylallyl moiety from dimethylallyl monophosphate (DMAP) to the flavin N5 and C6 atoms of FMN. This is Flavin prenyltransferase UbiX from Neisseria meningitidis serogroup B (strain ATCC BAA-335 / MC58).